Consider the following 432-residue polypeptide: Adenylosuccinate synthetase (432 aa).

Residues 12–18 and 40–42 contribute to the GTP site; these read GDEGKGK and GHT. Asp13 serves as the catalytic Proton acceptor. Mg(2+)-binding residues include Asp13 and Gly40. IMP-binding positions include 13–16, 38–41, Thr130, Arg144, Gln226, Thr241, and Arg305; these read DEGK and NAGH. His41 functions as the Proton donor in the catalytic mechanism. 301–307 serves as a coordination point for substrate; sequence STTGRSR. GTP contacts are provided by residues Arg307, 333–335, and 415–417; these read KLD and SVG.

Belongs to the adenylosuccinate synthetase family. In terms of assembly, homodimer. Mg(2+) serves as cofactor.

The protein resides in the cytoplasm. The catalysed reaction is IMP + L-aspartate + GTP = N(6)-(1,2-dicarboxyethyl)-AMP + GDP + phosphate + 2 H(+). It participates in purine metabolism; AMP biosynthesis via de novo pathway; AMP from IMP: step 1/2. In terms of biological role, plays an important role in the de novo pathway of purine nucleotide biosynthesis. Catalyzes the first committed step in the biosynthesis of AMP from IMP. The protein is Adenylosuccinate synthetase of Bdellovibrio bacteriovorus (strain ATCC 15356 / DSM 50701 / NCIMB 9529 / HD100).